Reading from the N-terminus, the 414-residue chain is tRNA dimethylallyltransferase (414 aa).

ATP is bound at residue 33–40 (APTASGKT). Substrate is bound at residue 35–40 (TASGKT). Interaction with substrate tRNA regions lie at residues 58–61 (DSAL), 182–186 (QRITR), and 266–271 (RCVGYR).

Belongs to the IPP transferase family. In terms of assembly, monomer. The cofactor is Mg(2+).

It catalyses the reaction adenosine(37) in tRNA + dimethylallyl diphosphate = N(6)-dimethylallyladenosine(37) in tRNA + diphosphate. In terms of biological role, catalyzes the transfer of a dimethylallyl group onto the adenine at position 37 in tRNAs that read codons beginning with uridine, leading to the formation of N6-(dimethylallyl)adenosine (i(6)A). The protein is tRNA dimethylallyltransferase of Psychrobacter cryohalolentis (strain ATCC BAA-1226 / DSM 17306 / VKM B-2378 / K5).